The sequence spans 278 residues: Sulfur carrier protein FdhD (278 aa).

The active-site Cysteine persulfide intermediate is cysteine 121. Residue 260–265 coordinates Mo-bis(molybdopterin guanine dinucleotide); sequence FCKPGR.

This sequence belongs to the FdhD family.

It localises to the cytoplasm. Its function is as follows. Required for formate dehydrogenase (FDH) activity. Acts as a sulfur carrier protein that transfers sulfur from IscS to the molybdenum cofactor prior to its insertion into FDH. The chain is Sulfur carrier protein FdhD from Salmonella agona (strain SL483).